Consider the following 455-residue polypeptide: Bleomycin hydrolase (455 aa).

Residues Cys73, His372, and Asn396 contribute to the active site.

The protein belongs to the peptidase C1 family. Homooctamer.

The protein localises to the cytoplasm. The catalysed reaction is Inactivates bleomycin B2 (a cytotoxic glycometallopeptide) by hydrolysis of a carboxyamide bond of beta-aminoalanine, but also shows general aminopeptidase activity. The specificity varies somewhat with source, but amino acid arylamides of Met, Leu and Ala are preferred.. Functionally, the normal physiological role of BLM hydrolase is unknown, but it catalyzes the inactivation of the antitumor drug BLM (a glycopeptide) by hydrolyzing the carboxamide bond of its B-aminoalaninamide moiety thus protecting normal and malignant cells from BLM toxicity. The polypeptide is Bleomycin hydrolase (BLMH) (Gallus gallus (Chicken)).